The sequence spans 111 residues: Viscotoxin-A3 (111 aa).

An N-terminal signal peptide occupies residues 1–26 (MEVVRGSSLVLLVLLLGALLVSQVES). Cystine bridges form between cysteine 29–cysteine 66, cysteine 30–cysteine 58, and cysteine 42–cysteine 52. Residues 73–111 (FYCTLGCESSQCATNSNGDAEAVRCKTACSDLCQDVDDA) constitute a propeptide, acidic domain.

This sequence belongs to the plant thionin (TC 1.C.44) family.

The protein resides in the secreted. In terms of biological role, thionins are small plant proteins which are toxic to animal cells. They seem to exert their toxic effect at the level of the cell membrane. Their precise function is not known. The polypeptide is Viscotoxin-A3 (THI2.1) (Viscum album (European mistletoe)).